The sequence spans 397 residues: Acetate kinase 2 (397 aa).

Residue Asn-10 coordinates Mg(2+). Residue Lys-17 coordinates ATP. Arg-90 is a substrate binding site. Residue Asp-147 is the Proton donor/acceptor of the active site. ATP contacts are provided by residues 207-211, 281-283, and 329-333; these read HLGNG, DAR, and GIGEN. Position 385 (Glu-385) interacts with Mg(2+).

It belongs to the acetokinase family. In terms of assembly, homodimer. Requires Mg(2+) as cofactor. Mn(2+) is required as a cofactor.

The protein localises to the cytoplasm. The enzyme catalyses acetate + ATP = acetyl phosphate + ADP. It functions in the pathway metabolic intermediate biosynthesis; acetyl-CoA biosynthesis; acetyl-CoA from acetate: step 1/2. Catalyzes the formation of acetyl phosphate from acetate and ATP. Can also catalyze the reverse reaction. This chain is Acetate kinase 2, found in Aliivibrio fischeri (strain ATCC 700601 / ES114) (Vibrio fischeri).